The sequence spans 926 residues: Chitin synthase-like protein 2 (926 aa).

The interval 1–56 (MSFQNPSYINAKHRSFLQPKDTQDSQDLRNWVSHSSVDEETAYSSSTLSSSSSKSF) is disordered. A compositionally biased stretch (low complexity) spans 44 to 55 (SSSTLSSSSSKS). The next 7 helical transmembrane spans lie at 564–584 (INSS…LWTT), 599–619 (LVFA…FLAF), 641–661 (LFLV…MLAM), 671–691 (LLFI…FCVF), 721–741 (LLIL…FFIF), 853–873 (VLVW…VFDG), and 885–905 (IFWS…TFIA).

It belongs to the chitin synthase family.

Its subcellular location is the membrane. In terms of biological role, plays a role in septum formation. Has no chitin synthase activity. This chain is Chitin synthase-like protein 2 (chs2), found in Schizosaccharomyces pombe (strain 972 / ATCC 24843) (Fission yeast).